Consider the following 718-residue polypeptide: Protein ENHANCED DISEASE RESISTANCE 2 (718 aa).

Positions 3–110 constitute a PH domain; it reads KVVYEGWMVR…WKEKIESVID (108 aa). The tract at residues 134 to 174 is disordered; that stretch reads TGRTASSSDHESQFSAAEDEEDSRRSLMRRTTIGNGPPESV. The 213-residue stretch at 180–392 folds into the START domain; sequence EFDAELANQN…VAGLREWFSQ (213 aa). The interval 437 to 483 is disordered; the sequence is RNSLLMDEDSDDDDEFQIAESEQEPETSKPETDVKRPEEEPAHNIDL. Residues 442–461 show a composition bias toward acidic residues; the sequence is MDEDSDDDDEFQIAESEQEP. A compositionally biased stretch (basic and acidic residues) spans 462-479; sequence ETSKPETDVKRPEEEPAH. The chain crosses the membrane as a helical span at residues 664 to 684; sequence GVLGLVIGVITSLVVEMAFLV.

As to expression, expressed ubiquitously in all tissues and organs, including leaves, roots, flowers, stems and siliques.

The protein resides in the endoplasmic reticulum membrane. Its subcellular location is the cell membrane. It is found in the endosome membrane. Its function is as follows. Negative regulator of the salicylic acid- (SA-) mediated resistance to pathogens, including the biotrophic powdery mildew pathogens Golovinomyces cichoracearum and Blumeria graminis, and the downy mildew pathogen Hyaloperonospora parasitica, probably by limiting the initiation of cell death and the establishment of the hypersensitive response (HR). Prevents ethylene-induced senescence. Binds to phosphatidylinositol-4-phosphate (PtdIns(4)P) in vitro. The chain is Protein ENHANCED DISEASE RESISTANCE 2 (EDR2) from Arabidopsis thaliana (Mouse-ear cress).